Consider the following 3317-residue polypeptide: Cadherin-23 (3317 aa).

Residues 1–23 (MRHPPVTWCAMLWLLMLVSGSWG) form the signal peptide. Residues 24–3062 (QVNRLPFFTN…SVQLPDDMSA (3039 aa)) lie on the Extracellular side of the membrane. 27 consecutive Cadherin domains span residues 34-132 (HFFD…APTF), 133-236 (HNQP…DPIF), 237-348 (INLP…APEF), 349-458 (NSSE…RPIF), 459-559 (SQPL…VPTF), 560-669 (QKDA…PPTF), 670-782 (SKPA…APYY), 777-888 (KDAP…DPTF), 889-993 (QNLP…TPTF), 994-1100 (FPAV…RPIF), 1101-1206 (LQSS…APVF), 1208-1311 (QQQY…AVQF), 1312-1416 (SNAS…SPRF), 1418-1525 (FTSD…PPVI), 1527-1632 (SPFG…APVF), 1633-1742 (QQPH…VPTF), 1743-1849 (PRDY…DPVL), 1850-1957 (LNLP…HPLF), 1958-2067 (TEGT…WPTF), 2068-2172 (SPPA…RPEF), 2173-2291 (LNPI…TPQF), 2295-2400 (GITY…NPIF), 2401-2507 (DQLS…RPQF), 2508-2609 (SKPQ…RPVF), 2612-2720 (PPNG…EPLF), 2727-2844 (SPQY…PPRF), and 2845-2973 (TKAE…EEEF). N-linked (GlcNAc...) asparagine glycosylation is found at Asn-155 and Asn-206. Residues Asn-349, Asn-391, Asn-432, Asn-464, Asn-470, Asn-600, Asn-692, Asn-763, Asn-808, Asn-825, Asn-939, Asn-999, Asn-1016, Asn-1169, Asn-1280, Asn-1313, Asn-1471, Asn-1532, Asn-1649, Asn-1665, Asn-1816, Asn-1855, Asn-1887, Asn-1900, Asn-2012, Asn-2048, Asn-2127, Asn-2166, Asn-2193, Asn-2261, Asn-2355, and Asn-2367 are each glycosylated (N-linked (GlcNAc...) asparagine). Asn-2576, Asn-2614, Asn-2747, Asn-2806, Asn-2875, Asn-2894, Asn-2939, and Asn-2979 each carry an N-linked (GlcNAc...) asparagine glycan. The chain crosses the membrane as a helical span at residues 3063–3083 (LQMAIIVLAILLFLAAMLFVL). Over 3084 to 3317 (MNWYYRTIHK…MESPLEITEL (234 aa)) the chain is Cytoplasmic.

In terms of assembly, antiparallel heterodimer with PCDH15. Interacts with USH1C and USH1G.

Its subcellular location is the cell membrane. In terms of biological role, cadherins are calcium-dependent cell adhesion proteins. They preferentially interact with themselves in a homophilic manner in connecting cells. CDH23 is required for establishing and/or maintaining the proper organization of the stereocilia bundle of hair cells in the cochlea and the vestibule during late embryonic/early postnatal development. It is part of the functional network formed by USH1C, USH1G, CDH23 and MYO7A that mediates mechanotransduction in cochlear hair cells. Required for normal hearing. The protein is Cadherin-23 (Cdh23) of Rattus norvegicus (Rat).